The chain runs to 661 residues: Transketolase (661 aa).

His-30 contributes to the substrate binding site. Residues His-70 and 118–120 (GPL) contribute to the thiamine diphosphate site. Positions 99-118 (STTPGHPEFRDTPGVEATTG) are disordered. Asp-159 lines the Mg(2+) pocket. Thiamine diphosphate-binding residues include Gly-160 and Asn-189. Mg(2+)-binding residues include Asn-189 and Val-191. Substrate contacts are provided by His-266, Arg-357, and Ser-384. His-266 contributes to the thiamine diphosphate binding site. Glu-411 acts as the Proton donor in catalysis. Phe-437 lines the thiamine diphosphate pocket. Residues His-461, Asp-469, and Arg-520 each coordinate substrate.

This sequence belongs to the transketolase family. Homodimer. Mg(2+) is required as a cofactor. Ca(2+) serves as cofactor. Requires Mn(2+) as cofactor. It depends on Co(2+) as a cofactor. The cofactor is thiamine diphosphate.

It carries out the reaction D-sedoheptulose 7-phosphate + D-glyceraldehyde 3-phosphate = aldehydo-D-ribose 5-phosphate + D-xylulose 5-phosphate. In terms of biological role, catalyzes the transfer of a two-carbon ketol group from a ketose donor to an aldose acceptor, via a covalent intermediate with the cofactor thiamine pyrophosphate. The chain is Transketolase (tkt) from Physarum polycephalum (Slime mold).